The chain runs to 71 residues: Permeability factor 2 (71 aa).

Cystine bridges form between Cys-7-Cys-33 and Cys-9-Cys-49.

This sequence belongs to the intercrine alpha (chemokine CxC) family. Homodimer.

It is found in the secreted. In terms of biological role, has chemotactic activity for neutrophils. The chain is Permeability factor 2 from Oryctolagus cuniculus (Rabbit).